We begin with the raw amino-acid sequence, 740 residues long: MRKLVEATQAGSEASVALAPSAPIQRLQAGLHHDPFEVLGVHVQPDGSKLVRAFLPAAEAVEVAGVRMTRVPGTDCFERLLPPGTALEAHPLLTWQDKRSGAWQRLRSPYSFAPQLGEMDLYLFGEGRHFEIWKVLGARVKTVDGVTGCLFAVWAPAVLRVSVVGDFNDWDGRRHPMRCRGVSGVWELFIPGLEAGHAYKYEILGRHGERVTKTDPYARQMFLRPETTSRVPDERPYAWGDAEWLAARTRFDWQHRPMSVYEVHPGSWRRRADGSFYSWRELTAELIPYVRDLGYTHIELLPVAEHPFDASWGYQVSGYYAATARFGSPDDLRAFVDACHQAGLGVLLDWVPGHFPKDDFALARFTGEPLYEHADPRRGEHQDWGTLVFDFGRNEVRNFLVANALYWLEEFHIDGLRVDAVASMLYLDYSRRHGEWLPNQHGGRENLEAIHFLHEVNAEVHARFPGAITIAEESTAWPAVSRPIELGGLGFSMKWNMGWMNDTLDYIEKEPVYRKYQHNQLTFSQMYAWSENFVLPLSHDEVVHLKKSLLDKMPGDRWQRFANLRLLYAWQYAHPGKKLLFMGGEFGQWNEWREAGQLDWVLLGFPEHDGIRALLRDLNRLYRDEAALHFWDFDPRGFRWIDCHDADQSVLSLVREGPDGAPPIVVLLNFTPVPRHGYRIGVPRAGAWCEVLNSDSMYYGGSNLGNGKPLYPAAVPWMGFGQSIEVTLPPLGAIFLKPCP.

Asp419 acts as the Nucleophile in catalysis. The Proton donor role is filled by Glu472.

The protein belongs to the glycosyl hydrolase 13 family. GlgB subfamily. Monomer.

The enzyme catalyses Transfers a segment of a (1-&gt;4)-alpha-D-glucan chain to a primary hydroxy group in a similar glucan chain.. The protein operates within glycan biosynthesis; glycogen biosynthesis. Functionally, catalyzes the formation of the alpha-1,6-glucosidic linkages in glycogen by scission of a 1,4-alpha-linked oligosaccharide from growing alpha-1,4-glucan chains and the subsequent attachment of the oligosaccharide to the alpha-1,6 position. The protein is 1,4-alpha-glucan branching enzyme GlgB of Thiobacillus denitrificans (strain ATCC 25259 / T1).